A 176-amino-acid chain; its full sequence is RNA pyrophosphohydrolase (176 aa).

Residues 6–149 (GYRPNVGIVI…KRDVYRRVMK (144 aa)) enclose the Nudix hydrolase domain. The short motif at 38–59 (GGINPGESAEQAMYRELFEEVG) is the Nudix box element.

It belongs to the Nudix hydrolase family. RppH subfamily. A divalent metal cation serves as cofactor.

Accelerates the degradation of transcripts by removing pyrophosphate from the 5'-end of triphosphorylated RNA, leading to a more labile monophosphorylated state that can stimulate subsequent ribonuclease cleavage. This chain is RNA pyrophosphohydrolase, found in Shigella dysenteriae serotype 1 (strain Sd197).